The primary structure comprises 338 residues: Photosystem II assembly lipoprotein Ycf48 (338 aa).

Positions 1 to 23 (MKKIITSFPNLLLSILLCFVLSS) are cleaved as a signal peptide. Cysteine 24 carries the N-palmitoyl cysteine lipid modification. A lipid anchor (S-diacylglycerol cysteine) is attached at cysteine 24.

It belongs to the Ycf48 family. In terms of assembly, part of early PSII assembly complexes which includes D1 (psbA) and PsbI; not found in mature PSII. Binds to the lumenal side of PSII complexes. Interacts with YidC.

Its subcellular location is the cellular thylakoid membrane. In terms of biological role, a factor required for optimal assembly of photosystem II (PSII), acting in the early stages of PSII assembly. Also plays a role in replacement of photodamaged D1 (psbA). Assists YidC in synthesis of chlorophyll-binding proteins. This Prochlorococcus marinus (strain MIT 9312) protein is Photosystem II assembly lipoprotein Ycf48.